The chain runs to 155 residues: Putative pre-16S rRNA nuclease (155 aa).

Belongs to the YqgF nuclease family.

It is found in the cytoplasm. Its function is as follows. Could be a nuclease involved in processing of the 5'-end of pre-16S rRNA. In Novosphingobium aromaticivorans (strain ATCC 700278 / DSM 12444 / CCUG 56034 / CIP 105152 / NBRC 16084 / F199), this protein is Putative pre-16S rRNA nuclease.